The sequence spans 455 residues: MITNEFDTITAIATPLGEGAIGIVRISGSKALAIIKKIFKGKNLDDVPSHTINYGHIVENGAIIDEVMVSVMRAPKTFTREDVIEINTHGGVAVTNEILQLVLRSGARMADPGEFTKRAFLNGRVDLAQAEAVMDLIRAKTDKAMAVAVQQLDGSLSNLINNTRQEILNTLAQVEVNIDYPEYDDVEEMTTALMREKTQEFETLLTNLLKTARRGKILREGLSTAIIGRPNVGKSSLLNNLLREEKAIVTDIEGTTRDVIEEYVNIKGVPLKLIDTAGIRETDDLVEKIGVERSKKALEEADLVLLVLNSAEKLTDQDRTLLEISQNSNRLILLNKTDLPEQIETDQLPEDCIKISVIKNQNIDVIEERINKLFFDNAAIVEKDATYLSNARHISLIEKALKSLQAVNDGLELGMPVDLLQVDMTRTWEILGEITGDAAPDELITQLFSQFCLGK.

Residues Arg-25, Glu-85, and Arg-124 each contribute to the (6S)-5-formyl-5,6,7,8-tetrahydrofolate site. The TrmE-type G domain occupies 221–375; sequence GLSTAIIGRP…IEERINKLFF (155 aa). Asn-231 lines the K(+) pocket. Residues 231 to 236, 250 to 256, and 275 to 278 contribute to the GTP site; these read NVGKSS, TDIEGTT, and DTAG. Ser-235 provides a ligand contact to Mg(2+). Residues Thr-250, Ile-252, and Thr-255 each contribute to the K(+) site. Position 256 (Thr-256) interacts with Mg(2+). Lys-455 serves as a coordination point for (6S)-5-formyl-5,6,7,8-tetrahydrofolate.

Belongs to the TRAFAC class TrmE-Era-EngA-EngB-Septin-like GTPase superfamily. TrmE GTPase family. As to quaternary structure, homodimer. Heterotetramer of two MnmE and two MnmG subunits. The cofactor is K(+).

Its subcellular location is the cytoplasm. In terms of biological role, exhibits a very high intrinsic GTPase hydrolysis rate. Involved in the addition of a carboxymethylaminomethyl (cmnm) group at the wobble position (U34) of certain tRNAs, forming tRNA-cmnm(5)s(2)U34. The chain is tRNA modification GTPase MnmE from Streptococcus mutans serotype c (strain ATCC 700610 / UA159).